Reading from the N-terminus, the 215-residue chain is Octanoyltransferase (215 aa).

The BPL/LPL catalytic domain maps to 31 to 206 (TTAPDEIWLV…QLVKHLDYAE (176 aa)). Substrate is bound by residues 70 to 77 (RGGQVTYH), 137 to 139 (SLG), and 150 to 152 (GLA). Cys168 (acyl-thioester intermediate) is an active-site residue.

The protein belongs to the LipB family.

Its subcellular location is the cytoplasm. It catalyses the reaction octanoyl-[ACP] + L-lysyl-[protein] = N(6)-octanoyl-L-lysyl-[protein] + holo-[ACP] + H(+). It functions in the pathway protein modification; protein lipoylation via endogenous pathway; protein N(6)-(lipoyl)lysine from octanoyl-[acyl-carrier-protein]: step 1/2. Catalyzes the transfer of endogenously produced octanoic acid from octanoyl-acyl-carrier-protein onto the lipoyl domains of lipoate-dependent enzymes. Lipoyl-ACP can also act as a substrate although octanoyl-ACP is likely to be the physiological substrate. The sequence is that of Octanoyltransferase from Pseudomonas fluorescens (strain Pf0-1).